A 378-amino-acid polypeptide reads, in one-letter code: MAEFVRAEVLGTKFEYTTRYVNPQPIGMGSFGLVCSAFDQITQQPVALKKIMKPFDSSSLAKRTYREIRLLKYLRHENLICMRDIFISPLEDIYIATELLGTDLGRLLSIKPLDSKFSQYFIYQILRGLKYIHSANVIHRDLKPTNILINENCDLKICDFGLARLQEPQMTGYVATRYYRAQEIMLTWQRYGVQVDVWSAGCILAEMLRRKPLFPGKDHVHQFHLITNILGNPPDAVIEKITSKNTVNFVKSLPSREPRDLSTVVPKDTDFDAIDLLKKMLVIDPDTRISAQDALRYPYLAPYHDPTDEPVASGPFDWSFDSADFPKETWKIMIYSEVLDYLNVDNPADPAPFDPSTPFDPSALEREFSEFLSDSGQI.

In terms of domain architecture, Protein kinase spans 20–300 (YVNPQPIGMG…AQDALRYPYL (281 aa)). ATP-binding positions include 26-34 (IGMGSFGLV) and Lys49. The Proton acceptor role is filled by Asp141. Thr171 is modified (phosphothreonine). A TXY motif is present at residues 171–173 (TGY). At Tyr173 the chain carries Phosphotyrosine.

It belongs to the protein kinase superfamily. Ser/Thr protein kinase family. MAP kinase subfamily. HOG1 sub-subfamily. As to quaternary structure, interacts with sakA upon osmotic and cell wall stresses. The cofactor is Mg(2+). Post-translationally, dually phosphorylated on Thr-171 and Tyr-173, which activates the enzyme.

It localises to the cytoplasm. The protein localises to the nucleus. The enzyme catalyses L-seryl-[protein] + ATP = O-phospho-L-seryl-[protein] + ADP + H(+). The catalysed reaction is L-threonyl-[protein] + ATP = O-phospho-L-threonyl-[protein] + ADP + H(+). Activated by tyrosine and threonine phosphorylation. Mitogen-activated protein kinase; part of an osmotic and general signal pathways involved in regulation of the response to the cell wall damage, oxidative stress, drug resistance, and establishment of infection. Required for growth on media where sorbitol or mannitol is the sole carbon source. With sakA, plays a redundant or cooperative role in the conidial stress resistance. Also plays a supportive role in osmotic stress adaptation when sakA is deficient. Involved in paradoxical growth, the cell wall integrity (CWI) pathway and biofilm formation. Acts by modulating sakA activity upon exposure to several types o stresses and during cell wall biosynthesis. Also collaborates with sakA to allow ful virulence in a neutropenic murine model of invasive pulmonary aspergillosis. MpkC and sakA have both independent and collaborative functions during the transcriptional response to transient osmotic stress, and mpkC plays a major role in the modulation of the response to DNA metabolism while activating mitochondrial functions and cation transport. The protein is Mitogen-activated protein kinase mpkC (mpkC) of Aspergillus fumigatus (strain ATCC MYA-4609 / CBS 101355 / FGSC A1100 / Af293) (Neosartorya fumigata).